The following is a 510-amino-acid chain: Probable lipid II flippase MurJ (510 aa).

12 helical membrane-spanning segments follow: residues 13–33 (DVVIAHLIGAGAAADVFLFAN), 81–101 (GLVSIVTILAMVGSPHVAALF), 130–150 (FPYLWFVTFVAFSGAVLNTIG), 154–174 (VMSFSPVLLNIAMIATALFLA), 182–202 (LALAIGIFLGGLLQFLFQIPF), 240–260 (INLLLDTVIASFLMTGSISWL), 266–286 (LLEFPLGLFGIAISTVILPTL), 315–335 (IFLLGVPAAIGIAVLAQPMLL), 357–377 (AFNAGLLSFMLIKILANGYYA), 396–416 (MGFNLLAIPFSYVGLAIASAM), 443–463 (VFFVKVLLAAIAMGAAVWYYV), and 481–501 (LVWLIVLAAIVYGATLILLGV).

This sequence belongs to the MurJ/MviN family.

It localises to the cell inner membrane. The protein operates within cell wall biogenesis; peptidoglycan biosynthesis. Functionally, involved in peptidoglycan biosynthesis. Transports lipid-linked peptidoglycan precursors from the inner to the outer leaflet of the cytoplasmic membrane. This Haemophilus influenzae (strain ATCC 51907 / DSM 11121 / KW20 / Rd) protein is Probable lipid II flippase MurJ.